The primary structure comprises 341 residues: Cyclic GMP-AMP synthase-like receptor (341 aa).

Residues Ser64 and 77-79 (EFD) each bind ATP. Mg(2+) contacts are provided by Glu77, Asp79, and Asp172. Residue Asp172 participates in GTP binding. ATP is bound by residues Lys230 and 246–250 (SYHIK). Glu258 lines the Mn(2+) pocket.

This sequence belongs to the mab-21 family. Mg(2+) serves as cofactor. Mn(2+) is required as a cofactor.

The enzyme catalyses GTP + ATP = 2',3'-cGAMP + 2 diphosphate. It carries out the reaction GTP + ATP = pppGp(2'-5')A + diphosphate. The catalysed reaction is pppGp(2'-5')A = 2',3'-cGAMP + diphosphate. Functionally, nucleotidyltransferase that catalyzes the formation of cyclic GMP-AMP (2',3'-cGAMP) from ATP and GTP and plays a key role in innate immunity. Acts as a key sensor of double-stranded RNA (dsRNA), the presence of dsRNA in the cytoplasm being a danger signal that triggers the immune responses. Directly binds dsRNA, activating the nucleotidyltransferase activity, leading to synthesis of 2',3'-cGAMP, a second messenger that binds to and activates Sting, thereby triggering the immune response via activation of the NF-kappa-B transcription factor. This chain is Cyclic GMP-AMP synthase-like receptor, found in Hydra vulgaris (Hydra).